Reading from the N-terminus, the 394-residue chain is Putative nickel insertion protein (394 aa).

Belongs to the LarC family.

The chain is Putative nickel insertion protein from Syntrophotalea carbinolica (strain DSM 2380 / NBRC 103641 / GraBd1) (Pelobacter carbinolicus).